The chain runs to 906 residues: Protein translocase subunit SecA (906 aa).

ATP-binding positions include glutamine 87, 105–109 (GEGKT), and aspartate 513. The disordered stretch occupies residues 860–906 (QVNKGEVVSDENTGDDTFVRNEKKVGRNEPCPCGSGKKYKQCHGKLD). Over residues 876–886 (TFVRNEKKVGR) the composition is skewed to basic and acidic residues. Zn(2+)-binding residues include cysteine 890, cysteine 892, cysteine 901, and histidine 902. The span at 896 to 906 (KKYKQCHGKLD) shows a compositional bias: basic residues.

This sequence belongs to the SecA family. In terms of assembly, monomer and homodimer. Part of the essential Sec protein translocation apparatus which comprises SecA, SecYEG and auxiliary proteins SecDF-YajC and YidC. Zn(2+) serves as cofactor.

The protein localises to the cell inner membrane. It localises to the cytoplasm. The catalysed reaction is ATP + H2O + cellular proteinSide 1 = ADP + phosphate + cellular proteinSide 2.. Its function is as follows. Part of the Sec protein translocase complex. Interacts with the SecYEG preprotein conducting channel. Has a central role in coupling the hydrolysis of ATP to the transfer of proteins into and across the cell membrane, serving both as a receptor for the preprotein-SecB complex and as an ATP-driven molecular motor driving the stepwise translocation of polypeptide chains across the membrane. The chain is Protein translocase subunit SecA from Psychromonas ingrahamii (strain DSM 17664 / CCUG 51855 / 37).